The following is a 106-amino-acid chain: Large ribosomal subunit protein eL42 (106 aa).

The interval 26 to 53 (YKKGKDSLYAQGKRRYDRKQSGYGGQTK) is disordered.

It belongs to the eukaryotic ribosomal protein eL42 family. Component of the large ribosomal subunit.

It localises to the cytoplasm. Component of the large ribosomal subunit. The ribosome is a large ribonucleoprotein complex responsible for the synthesis of proteins in the cell. This is Large ribosomal subunit protein eL42 (rpl36a) from Danio rerio (Zebrafish).